We begin with the raw amino-acid sequence, 299 residues long: RGG repeats nuclear RNA binding protein A (299 aa).

Gly residues predominate over residues 1 to 21; sequence RGGGRGGPRGGGRGRGPGRGR. Disordered stretches follow at residues 1-173 and 232-299; these read RGGG…KEMT and EAVE…LVAK. Over residues 45 to 60 the composition is skewed to basic and acidic residues; that stretch reads RVQEDGESGKLSERRG. Residues 61–78 show a composition bias toward gly residues; that stretch reads GYGGPRGGFHGGRRGGFN. Composition is skewed to basic and acidic residues over residues 86–98 and 134–146; these read EGER…DRRS and DGEK…KEAG. Residues 88-98 carry the Arginine-rich RNA-binding motif E-R-P-R-R-X-[F/Y]-[E/D]-R-R-S motif; sequence ERPRRVFDRRS. The span at 267 to 278 shows a compositional bias: gly residues; the sequence is RGRGGFGGGVGG.

It belongs to the SERBP1-HABP4 family. In terms of tissue distribution, expressed in seedlings but not in roots.

Its subcellular location is the nucleus. It localises to the cytoplasm. The protein resides in the perinuclear region. Ribosome-binding protein that acts as a regulator of mRNA translation by promoting ribosome inactivation. Binds RNA. This is RGG repeats nuclear RNA binding protein A from Nicotiana tabacum (Common tobacco).